Here is a 133-residue protein sequence, read N- to C-terminus: Large ribosomal subunit protein uL15 (133 aa).

The tract at residues 1–64 (MGLENLKPAK…QPLQRRLPKI (64 aa)) is disordered.

This sequence belongs to the universal ribosomal protein uL15 family. In terms of assembly, part of the 50S ribosomal subunit.

In terms of biological role, binds to the 23S rRNA. In Helicobacter pylori (strain Shi470), this protein is Large ribosomal subunit protein uL15.